We begin with the raw amino-acid sequence, 416 residues long: Serine carboxypeptidase S10 family member 1 (416 aa).

Positions 1 to 20 (MMKLLFIIISIIFVINVSNS) are cleaved as a signal peptide. 2 N-linked (GlcNAc...) asparagine glycosylation sites follow: N33 and N84. S156 is an active-site residue. N-linked (GlcNAc...) asparagine glycosylation is found at N235, N273, and N295. The active site involves D338. Residue N385 is glycosylated (N-linked (GlcNAc...) asparagine). Residue H396 is part of the active site.

Belongs to the peptidase S10 family.

Its subcellular location is the secreted. In terms of biological role, probable carboxypeptidase. The chain is Serine carboxypeptidase S10 family member 1 from Dictyostelium discoideum (Social amoeba).